The primary structure comprises 86 residues: U15-lycotoxin-Ls1a (86 aa).

The N-terminal stretch at 1-20 is a signal peptide; sequence MNSKIFAVLFLLAFLSCVLS. One can recognise a WAP domain in the interval 21–66; the sequence is DQYCPKSSITACKKMNIRNDCCKDDDCTGGSWCCATPCGNFCKYPT. Intrachain disulfides connect Cys-24-Cys-54, Cys-32-Cys-58, Cys-41-Cys-53, Cys-42-Cys-80, and Cys-47-Cys-62.

Belongs to the venom protein 11 family. 01 (wap-1) subfamily. Post-translationally, contains 5 disulfide bonds. Expressed by the venom gland.

Its subcellular location is the secreted. Functionally, has antibacterial activity. This chain is U15-lycotoxin-Ls1a, found in Lycosa singoriensis (Wolf spider).